Consider the following 254-residue polypeptide: L-rhamnose 1-dehydrogenase (NAD(P)(+)) (254 aa).

Residues G13, S15, I18, D64, V65, and N91 each contribute to the NADP(+) site. S144 functions as the Proton donor in the catalytic mechanism. The beta-L-rhamnose site is built by S144, S146, Q154, and Y157. Residues Y157 and K161 each contribute to the NADP(+) site. The Proton acceptor role is filled by Y157. K161 serves as the catalytic Lowers pKa of active site Tyr. T189 serves as a coordination point for beta-L-rhamnose. Residue I190 coordinates NADP(+). Residue N195 participates in beta-L-rhamnose binding.

This sequence belongs to the short-chain dehydrogenases/reductases (SDR) family.

It catalyses the reaction L-rhamnofuranose + NAD(+) = L-rhamnono-1,4-lactone + NADH + H(+). The enzyme catalyses L-rhamnofuranose + NADP(+) = L-rhamnono-1,4-lactone + NADPH + H(+). The protein operates within carbohydrate degradation; L-rhamnose degradation. Its function is as follows. NAD(P)-dependent dehydrogenase that catalyzes the oxidation of L-rhamnose to L-rhamnono-1,4-lactone. Also shows high activity with L-lyxose and low activity with L-mannose. Can utilize either NAD(+) or NADP(+), with a slight preference for NADP(+). Catalyzes the first step in an alternative pathway for rhamnose utilization that does not involve phosphorylated intermediates. The sequence is that of L-rhamnose 1-dehydrogenase (NAD(P)(+)) from Sphingomonas sp. (strain SKA58).